We begin with the raw amino-acid sequence, 643 residues long: Inner kinetochore subunit cnp3 (643 aa).

2 disordered regions span residues 55-209 (SIHL…AFPD) and 224-386 (SIKD…QSDS). Low complexity-rich tracts occupy residues 85–97 (AASD…SSSD) and 104–125 (DIPS…GSSG). Residues 166-185 (DFSRIKASPDRKKFEPRRST) are compositionally biased toward basic and acidic residues. Polar residues-rich tracts occupy residues 235 to 261 (YIQT…PSKQ), 295 to 304 (LNRSLANNSQ), and 313 to 322 (KPLQESSINS). Composition is skewed to basic residues over residues 332-341 (VKRKRGRPRK) and 360-370 (GAKKPAIRNAK). The segment at residues 333 to 345 (KRKRGRPRKNKLE) is a DNA-binding region (a.T hook).

It belongs to the CENP-C/MIF2 family. In terms of assembly, component of the inner kinetochore constitutive centromere-associated network (CCAN) (also known as central kinetochore Sim4 complex in fission yeast), which is composed of at least cnl2, cnp3, cnp20, fta1, fta2, fta3, fta4, fta6, fta7, mal2, mhf1, mhf2, mis6, mis15, mis17, sim4 and wip1.

The protein localises to the nucleus. Its subcellular location is the nucleoplasm. In terms of biological role, component of the kinetochore, a multiprotein complex that assembles on centromeric DNA and attaches chromosomes to spindle microtubules, mediating chromosome segregation and sister chromatid segregation during meiosis and mitosis. Component of the inner kinetochore constitutive centromere-associated network (CCAN), which serves as a structural platform for outer kinetochore assembly. The polypeptide is Inner kinetochore subunit cnp3 (cnp3) (Schizosaccharomyces pombe (strain 972 / ATCC 24843) (Fission yeast)).